A 423-amino-acid chain; its full sequence is Tumor necrosis factor receptor superfamily member 19 (423 aa).

The N-terminal stretch at 1 to 29 is a signal peptide; sequence MALKVLLEQEKTFFTLLVLLGYLSCKVTC. The Extracellular segment spans residues 30–170; sequence ESGDCRQQEF…TASSPRDTAL (141 aa). TNFR-Cys repeat units follow at residues 33–72, 74–114, and 116–149; these read DCRQQEFRDRSGNCVPCNQCGPGMELSKECGFGYGEDAQC, TCRL…DAIC, and DCLPGFYRKTKLVGFQDMECVPCGDPPPPYEPHC. 8 cysteine pairs are disulfide-bonded: cysteine 34/cysteine 46, cysteine 49/cysteine 62, cysteine 52/cysteine 72, cysteine 75/cysteine 89, cysteine 92/cysteine 106, cysteine 95/cysteine 114, cysteine 117/cysteine 135, and cysteine 138/cysteine 149. Asparagine 105 carries an N-linked (GlcNAc...) asparagine glycan. Residues 171–191 traverse the membrane as a helical segment; sequence AAVICSALATVLLALLILCVI. At 192 to 423 the chain is on the cytoplasmic side; that stretch reads YCKRQFMEKK…LQVRQRLGSL (232 aa).

As to quaternary structure, associates with TRAF1, TRAF2, TRAF3 and TRAF5. Interacts with LINGO1. As to expression, highly expressed in prostate. Detected at lower levels in thymus, spleen, testis, uterus, small intestine, colon and peripheral blood leukocytes.

The protein localises to the membrane. Functionally, can mediate activation of JNK and NF-kappa-B. May promote caspase-independent cell death. The polypeptide is Tumor necrosis factor receptor superfamily member 19 (TNFRSF19) (Homo sapiens (Human)).